A 324-amino-acid chain; its full sequence is tRNA dimethylallyltransferase (324 aa).

15–22 (GPTATGKS) contributes to the ATP binding site. Position 17-22 (17-22 (TATGKS)) interacts with substrate. Residues 40 to 43 (DSAQ) form an interaction with substrate tRNA region.

It belongs to the IPP transferase family. As to quaternary structure, monomer. Mg(2+) serves as cofactor.

It catalyses the reaction adenosine(37) in tRNA + dimethylallyl diphosphate = N(6)-dimethylallyladenosine(37) in tRNA + diphosphate. Its function is as follows. Catalyzes the transfer of a dimethylallyl group onto the adenine at position 37 in tRNAs that read codons beginning with uridine, leading to the formation of N6-(dimethylallyl)adenosine (i(6)A). In Moorella thermoacetica (strain ATCC 39073 / JCM 9320), this protein is tRNA dimethylallyltransferase.